The primary structure comprises 361 residues: D-alanine--D-alanine ligase (361 aa).

One can recognise an ATP-grasp domain in the interval 134–344 (KILAQRAGVP…YTDLITKLID (211 aa)). 169–224 (ASQLGSDLFVKPSNQGSSVGVSHVTNEKEYKVALAEAFKYDDKVLVEETVHGTEVE) lines the ATP pocket. 3 residues coordinate Mg(2+): Asp297, Glu311, and Asn313.

This sequence belongs to the D-alanine--D-alanine ligase family. The cofactor is Mg(2+). It depends on Mn(2+) as a cofactor.

It localises to the cytoplasm. It catalyses the reaction 2 D-alanine + ATP = D-alanyl-D-alanine + ADP + phosphate + H(+). Its pathway is cell wall biogenesis; peptidoglycan biosynthesis. In terms of biological role, cell wall formation. The sequence is that of D-alanine--D-alanine ligase from Lactobacillus gasseri (strain ATCC 33323 / DSM 20243 / BCRC 14619 / CIP 102991 / JCM 1131 / KCTC 3163 / NCIMB 11718 / NCTC 13722 / AM63).